The following is a 157-amino-acid chain: MMPDSPIALHLDLQVATQAEQLPSQEEFESWVRLALGNVMPEAEMTIRLVDEAESQQLNHTYRGKDKPTNVLSFPFESPPEVELPLLGDLVICVPVVEQEAEIQGKSLTAHWAHMVVHGCLHLLGYDHIIDSEAEEMESLETQLIESLGFPNPYKEQ.

Zn(2+) contacts are provided by His-118, His-122, and His-128.

This sequence belongs to the endoribonuclease YbeY family. It depends on Zn(2+) as a cofactor.

It is found in the cytoplasm. Its function is as follows. Single strand-specific metallo-endoribonuclease involved in late-stage 70S ribosome quality control and in maturation of the 3' terminus of the 16S rRNA. This is Endoribonuclease YbeY from Shewanella loihica (strain ATCC BAA-1088 / PV-4).